The primary structure comprises 127 residues: Aspartate 1-decarboxylase (127 aa).

The Schiff-base intermediate with substrate; via pyruvic acid role is filled by serine 25. Serine 25 carries the pyruvic acid (Ser) modification. Threonine 57 contributes to the substrate binding site. Tyrosine 58 (proton donor) is an active-site residue. 73–75 lines the substrate pocket; the sequence is GAA.

Belongs to the PanD family. As to quaternary structure, heterooctamer of four alpha and four beta subunits. The cofactor is pyruvate. In terms of processing, is synthesized initially as an inactive proenzyme, which is activated by self-cleavage at a specific serine bond to produce a beta-subunit with a hydroxyl group at its C-terminus and an alpha-subunit with a pyruvoyl group at its N-terminus.

Its subcellular location is the cytoplasm. It carries out the reaction L-aspartate + H(+) = beta-alanine + CO2. Its pathway is cofactor biosynthesis; (R)-pantothenate biosynthesis; beta-alanine from L-aspartate: step 1/1. Functionally, catalyzes the pyruvoyl-dependent decarboxylation of aspartate to produce beta-alanine. The polypeptide is Aspartate 1-decarboxylase (Anoxybacillus flavithermus (strain DSM 21510 / WK1)).